The following is a 98-amino-acid chain: Small ribosomal subunit protein uS19 (98 aa).

2 disordered regions span residues 1-30 (MARSIKKGPFADKHLTKKVEDANKGNKKSV) and 78-98 (RTFHGHSAEKKAAAAPGPAKK). Basic and acidic residues predominate over residues 9 to 24 (PFADKHLTKKVEDANK).

It belongs to the universal ribosomal protein uS19 family.

Protein S19 forms a complex with S13 that binds strongly to the 16S ribosomal RNA. In Anaeromyxobacter dehalogenans (strain 2CP-C), this protein is Small ribosomal subunit protein uS19.